The chain runs to 185 residues: Ribosome-recycling factor (185 aa).

The protein belongs to the RRF family.

The protein localises to the cytoplasm. Functionally, responsible for the release of ribosomes from messenger RNA at the termination of protein biosynthesis. May increase the efficiency of translation by recycling ribosomes from one round of translation to another. The sequence is that of Ribosome-recycling factor from Thermotoga sp. (strain RQ2).